The following is a 563-amino-acid chain: Tripeptidyl-peptidase 1 (563 aa).

Residues 1 to 19 form the signal peptide; sequence MGLQARFLGLLALVIAGKC. Positions 20 to 195 are cleaved as a propeptide — removed in mature form; it reads THSPEPDQRW…PEPQGVGPVG (176 aa). Cysteines 111 and 122 form a disulfide. The 365-residue stretch at 199–563 folds into the Peptidase S53 domain; that stretch reads GVTPSVLRQR…PALLKTLLNP (365 aa). N-linked (GlcNAc...) asparagine glycans are attached at residues Asn-210 and Asn-222. Residues Glu-272 and Asp-276 each act as charge relay system in the active site. Residues Asn-286, Asn-313, and Asn-443 are each glycosylated (N-linked (GlcNAc...) asparagine). Disulfide bonds link Cys-365–Cys-526 and Cys-522–Cys-537. Residue Ser-475 is the Charge relay system of the active site. Asp-517 and Val-518 together coordinate Ca(2+). The Ca(2+) site is built by Gly-539, Gly-541, and Asp-543.

Monomer. Interacts with CLN5. Interacts with CLN3. The cofactor is Ca(2+). Post-translationally, activated by autocatalytic proteolytical processing upon acidification. N-glycosylation is required for processing and activity.

Its subcellular location is the lysosome. The protein localises to the melanosome. The enzyme catalyses Release of an N-terminal tripeptide from a polypeptide, but also has endopeptidase activity.. Functionally, lysosomal serine protease with tripeptidyl-peptidase I activity. May act as a non-specific lysosomal peptidase which generates tripeptides from the breakdown products produced by lysosomal proteinases. Requires substrates with an unsubstituted N-terminus. The polypeptide is Tripeptidyl-peptidase 1 (Tpp1) (Rattus norvegicus (Rat)).